Consider the following 435-residue polypeptide: Endosome-associated-trafficking regulator 1 (435 aa).

2 positions are modified to phosphoserine: serine 18 and serine 147. Disordered stretches follow at residues 136 to 185 (ASRH…TGWS) and 225 to 251 (ESLP…PSAD). Acidic residues predominate over residues 173–182 (LLDEEEDEDT). Residues 173–198 (LLDEEEDEDTGWSGAYLPSAIEQTHP) form a required for interaction with PTPN13 region. The span at 240–250 (SPASPAGSPSA) shows a compositional bias: low complexity. Serine 243 and serine 247 each carry phosphoserine. Residues 261–371 (DRHLRTLQIS…FQRENEALRC (111 aa)) are a coiled coil.

This sequence belongs to the ENTR1 family. As to quaternary structure, found in a complex with ENTR1, PTPN13 and GIT1. Interacts with PTPN13 (via the FERM domain). Interacts (via N-terminus) with GIT1 (via N- and C-terminus); this interaction is direct. Interacts with NOD2. Interacts (via N-terminus) with IFT88. Interacts with VPS35. Phosphorylated. In terms of tissue distribution, expressed in the colon (at protein level).

Its subcellular location is the cytoplasm. It localises to the early endosome. It is found in the endosome. The protein localises to the recycling endosome. The protein resides in the midbody. Its subcellular location is the cytoskeleton. It localises to the microtubule organizing center. It is found in the centrosome. The protein localises to the cilium basal body. Endosome-associated protein that plays a role in membrane receptor sorting, cytokinesis and ciliogenesis. Involved in the endosome-to-plasma membrane trafficking and recycling of SNX27-retromer-dependent cargo proteins, such as GLUT1. Involved in the regulation of cytokinesis; the function may involve PTPN13 and GIT1. Plays a role in the formation of cilia. Involved in cargo protein localization, such as PKD2, at primary cilia. Involved in the presentation of the tumor necrosis factor (TNF) receptor TNFRSF1A on the cell surface, and hence in the modulation of the TNF-induced apoptosis. The sequence is that of Endosome-associated-trafficking regulator 1 from Homo sapiens (Human).